The sequence spans 295 residues: Pyridoxal 5'-phosphate synthase subunit PdxS (295 aa).

Residue aspartate 25 coordinates D-ribose 5-phosphate. Lysine 82 functions as the Schiff-base intermediate with D-ribose 5-phosphate in the catalytic mechanism. Glycine 154 contributes to the D-ribose 5-phosphate binding site. A D-glyceraldehyde 3-phosphate-binding site is contributed by arginine 166. D-ribose 5-phosphate-binding positions include glycine 215 and 236 to 237; that span reads GS.

The protein belongs to the PdxS/SNZ family. As to quaternary structure, in the presence of PdxT, forms a dodecamer of heterodimers.

It carries out the reaction aldehydo-D-ribose 5-phosphate + D-glyceraldehyde 3-phosphate + L-glutamine = pyridoxal 5'-phosphate + L-glutamate + phosphate + 3 H2O + H(+). The protein operates within cofactor biosynthesis; pyridoxal 5'-phosphate biosynthesis. Its function is as follows. Catalyzes the formation of pyridoxal 5'-phosphate from ribose 5-phosphate (RBP), glyceraldehyde 3-phosphate (G3P) and ammonia. The ammonia is provided by the PdxT subunit. Can also use ribulose 5-phosphate and dihydroxyacetone phosphate as substrates, resulting from enzyme-catalyzed isomerization of RBP and G3P, respectively. This Shouchella clausii (strain KSM-K16) (Alkalihalobacillus clausii) protein is Pyridoxal 5'-phosphate synthase subunit PdxS.